We begin with the raw amino-acid sequence, 504 residues long: Maturase K (504 aa).

It belongs to the intron maturase 2 family. MatK subfamily.

It is found in the plastid. Its subcellular location is the chloroplast. Functionally, usually encoded in the trnK tRNA gene intron. Probably assists in splicing its own and other chloroplast group II introns. The sequence is that of Maturase K from Capsella bursa-pastoris (Shepherd's purse).